Consider the following 52-residue polypeptide: Mitogenic lectin alpha chain (52 aa).

This sequence belongs to the leguminous lectin family. Tetramer of two alpha and two beta chains.

This Vicia sativa (Spring vetch) protein is Mitogenic lectin alpha chain.